Here is an 808-residue protein sequence, read N- to C-terminus: Tegument protein UL47 homolog (808 aa).

2 disordered regions span residues 1–21 (MQMP…RENQ) and 77–266 (PNEE…SFGE). The span at 83-92 (DNSRGRDRTR) shows a compositional bias: basic and acidic residues. Residues 133-160 (SRARSRRRSSSRRRHRNASMHMHFRGGS) show a composition bias toward basic residues. The span at 162 to 171 (RSATGSQNLI) shows a compositional bias: polar residues. The span at 197–214 (RSSRVRRRHRRSSRRRGP) shows a compositional bias: basic residues. The segment covering 235-259 (PISDIDQKRLRKNSDTSSRGTRESP) has biased composition (basic and acidic residues).

Belongs to the alphaherpesvirinae HHV-1 UL47 family. Interacts with US3 kinase. Interacts with UL31 and UL34; these interactions seem important for efficient virion nuclear egress. Interacts with UL41/VHS. Post-translationally, phosphorylated by US3. This phosphorylation is required for proper nuclear localization. In terms of processing, O-glycosylated.

The protein resides in the virion tegument. It localises to the host nucleus. The protein localises to the host cytoplasm. In terms of biological role, tegument protein that can bind to various RNA transcripts. Plays a role in the attenuation of selective viral and cellular mRNA degradation by modulating the activity of host shutoff RNase UL41/VHS. Also plays a role in the primary envelopment of virions in the perinuclear space, probably by interacting with two nuclear egress proteins UL31 and UL34. Plays an important role in the splicing of glycoprotein/gC transcripts and thereby participates in bird-to-bird viral transmission. The chain is Tegument protein UL47 homolog (MDV060) from Gallus gallus (Chicken).